Here is a 2211-residue protein sequence, read N- to C-terminus: Nonribosomal peptide synthetase 13 (2211 aa).

Residues 76-475 (TYAELDSLSD…IEHHLQLTLP (400 aa)) form an adenylation 1 region. In terms of domain architecture, Carrier 1 spans 594 to 671 (PPSTPKEATI…EQSKRAGLIQ (78 aa)). Position 631 is an O-(pantetheine 4'-phosphoryl)serine (S631). The tract at residues 710-975 (EDIYPCTALQ…IATVPTRIRV (266 aa)) is condensation 1. Residues 1169-1563 (TYRELWAHSS…LGAVEASVMR (395 aa)) form an adenylation 2 region. The 80-residue stretch at 1677 to 1756 (PMSDDNERRL…RSRHLITEQA (80 aa)) folds into the Carrier 2 domain. At S1714 the chain carries O-(pantetheine 4'-phosphoryl)serine. The segment at 1814–2069 (HFQFDLSGAV…CTNYIPYRLS (256 aa)) is condensation 2.

It belongs to the NRP synthetase family.

The catalysed reaction is L-proline + L-tryptophan + 2 ATP = brevianamide F + 2 AMP + 2 diphosphate + 2 H(+). It participates in mycotoxin biosynthesis. Its function is as follows. Nonribosomal peptide synthetase; part of the gene cluster that mediates the biosynthesis of fumitremorgins, indole alkaloids that carry not only intriguing chemical structures, but also interesting biological and pharmacological activities. The biosynthesis of fumitremorgin-type alkaloids begins by condensation of the two amino acids L-tryptophan and L-proline to brevianamide F, catalyzed by the non-ribosomal peptide synthetase ftmA. Brevianamide F is then prenylated by the prenyltransferase ftmPT1/ftmB in the presence of dimethylallyl diphosphate, resulting in the formation of tryprostatin B. The three cytochrome P450 monooxygenases, ftmP450-1/ftmC, ftmP450-2/ftmE and ftmP450-3/FtmG, are responsible for the conversion of tryprostatin B to 6-hydroxytryprostatin B, tryprostatin A to fumitremorgin C and fumitremorgin C to 12,13-dihydroxyfumitremorgin C, respectively. The putative methyltransferase ftmMT/ftmD is expected for the conversion of 6-hydroxytryprostatin B to tryprostatin A. FtmPT2/FtmH catalyzes the prenylation of 12,13-dihydroxyfumitre-morgin C in the presence of dimethylallyl diphosphate, resulting in the formation of fumitremorgin B. Fumitremorgin B is further converted to verruculogen by ftmOx1/ftmF via the insertion of an endoperoxide bond between the two prenyl moieties. In some fungal species, verruculogen is further converted to fumitremorgin A, but the enzymes involved in this step have not been identified yet. This is Nonribosomal peptide synthetase 13 from Aspergillus fumigatus (strain ATCC MYA-4609 / CBS 101355 / FGSC A1100 / Af293) (Neosartorya fumigata).